Reading from the N-terminus, the 399-residue chain is Aromatic-amino-acid aminotransferase (399 aa).

Glycine 36, tyrosine 67, tryptophan 132, and asparagine 184 together coordinate substrate. Lysine 247 carries the post-translational modification N6-(pyridoxal phosphate)lysine. Arginine 375 is a binding site for substrate.

It belongs to the class-I pyridoxal-phosphate-dependent aminotransferase family. As to quaternary structure, homodimer. It depends on pyridoxal 5'-phosphate as a cofactor.

The protein localises to the cytoplasm. It catalyses the reaction an aromatic L-alpha-amino acid + 2-oxoglutarate = an aromatic oxo-acid + L-glutamate. This is Aromatic-amino-acid aminotransferase (phhC) from Pseudomonas aeruginosa (strain ATCC 15692 / DSM 22644 / CIP 104116 / JCM 14847 / LMG 12228 / 1C / PRS 101 / PAO1).